Reading from the N-terminus, the 330-residue chain is Probable WRKY transcription factor 74 (330 aa).

A DNA-binding region (WRKY) is located at residues 256–322 (KIADIPPDEY…YEGEHNHSRI (67 aa)).

It localises to the nucleus. Functionally, transcription factor. Interacts specifically with the W box (5'-(T)TGAC[CT]-3'), a frequently occurring elicitor-responsive cis-acting element. The protein is Probable WRKY transcription factor 74 (WRKY74) of Arabidopsis thaliana (Mouse-ear cress).